A 58-amino-acid chain; its full sequence is Large ribosomal subunit protein uL30 (58 aa).

The protein belongs to the universal ribosomal protein uL30 family. Part of the 50S ribosomal subunit.

The sequence is that of Large ribosomal subunit protein uL30 from Pseudomonas savastanoi pv. phaseolicola (strain 1448A / Race 6) (Pseudomonas syringae pv. phaseolicola (strain 1448A / Race 6)).